A 288-amino-acid chain; its full sequence is Rhythmically expressed gene 5 protein (288 aa).

As to expression, expressed in head, but not in the body. Expression levels oscillate with the circadian rhythm.

In terms of biological role, involved in the generation of biological rhythms (Potential). In the head, oscillates in abundance with a daily peak during early night, even under constant darkness. Oscillation is dependent on period (per) function. The chain is Rhythmically expressed gene 5 protein (Reg-5) from Drosophila melanogaster (Fruit fly).